The primary structure comprises 648 residues: Nucleoside triphosphatase I (648 aa).

One can recognise a Helicase ATP-binding domain in the interval 48-213 (FIGLKNLNSM…NNLIGLLRPN (166 aa)). ATP is bound at residue 61 to 68 (WDTGTGKT). Positions 151–154 (DEVH) match the DEXH box motif. Residues 379–542 (YIEACRIILN…KINVVFDLLK (164 aa)) form the Helicase C-terminal domain. The segment at 468-534 (DIIILDMPWN…DIIKNKQGKI (67 aa)) is binding to the cap-specific mRNA (nucleoside-2'-O-)-methyltransferase.

It belongs to the helicase family. NPH I subfamily. Monomer. Interacts (via C-terminus) with RAP94 (via N-terminus). Interacts with the cap-specific mRNA (nucleoside-2'-O-)-methyltransferase.

The protein resides in the virion. The catalysed reaction is a ribonucleoside 5'-triphosphate + H2O = a ribonucleoside 5'-diphosphate + phosphate + H(+). DNA-dependent ATPase required for providing the needed energy to achieve the termination of early transcripts. Acts in concert with the RAP94 subunit of the virion RNA polymerase and the capping enzyme/VTF to catalyze release of UUUUUNU-containing nascent RNA from the elongation complex. NPH-I must bind ssDNA in order to exhibit ATPase activity. The sequence is that of Nucleoside triphosphatase I (NPH1) from Choristoneura fumiferana (Spruce budworm moth).